Consider the following 370-residue polypeptide: tRNA-specific 2-thiouridylase MnmA (370 aa).

Residues 9–16 (GMSGGVDS) and Met-35 each bind ATP. The interval 95 to 97 (NPD) is interaction with target base in tRNA. Cys-100 functions as the Nucleophile in the catalytic mechanism. Cys-100 and Cys-196 form a disulfide bridge. Position 124 (Gly-124) interacts with ATP. The interval 146-148 (KDQ) is interaction with tRNA. The active-site Cysteine persulfide intermediate is Cys-196. The tract at residues 308-309 (RY) is interaction with tRNA.

Belongs to the MnmA/TRMU family.

It is found in the cytoplasm. It catalyses the reaction S-sulfanyl-L-cysteinyl-[protein] + uridine(34) in tRNA + AH2 + ATP = 2-thiouridine(34) in tRNA + L-cysteinyl-[protein] + A + AMP + diphosphate + H(+). Its function is as follows. Catalyzes the 2-thiolation of uridine at the wobble position (U34) of tRNA, leading to the formation of s(2)U34. In Ralstonia nicotianae (strain ATCC BAA-1114 / GMI1000) (Ralstonia solanacearum), this protein is tRNA-specific 2-thiouridylase MnmA.